Consider the following 162-residue polypeptide: Allophycocyanin alpha-B chain (162 aa).

Residue Asn-71 is modified to N4-methylasparagine. Cys-81 lines the (2R,3E)-phycocyanobilin pocket.

The protein belongs to the phycobiliprotein family. Post-translationally, contains one covalently linked phycocyanobilin chromophore.

The protein resides in the plastid. It localises to the cyanelle thylakoid membrane. Its function is as follows. Allophycocyanin is a photosynthetic bile pigment-protein complex with maximum absorption at approximately 650 nanometers. In Cyanophora paradoxa, this protein is Allophycocyanin alpha-B chain (apcD).